Reading from the N-terminus, the 264-residue chain is Cancer/testis antigen 55 (264 aa).

Positions 242-264 (SSSGFQDDGGLGRPKRERRSQSI) are disordered. Basic residues predominate over residues 254 to 264 (RPKRERRSQSI).

In terms of assembly, interacts with GABARAP; this interaction may be important for GABARAP protein stability. Isoform 1 interacts with LAMP2; this interaction may be important for LAMP2 protein stability. In terms of tissue distribution, testis-specific. Expressed in spermatozoa (at protein level).

The protein resides in the cytoplasm. It is found in the cytoplasmic vesicle. Its subcellular location is the secretory vesicle. The protein localises to the acrosome. It localises to the cell projection. The protein resides in the cilium. It is found in the flagellum. Its function is as follows. Plays a role in spermatogenesis, possibly acting in the regulation of the autophagy pathway. The protein is Cancer/testis antigen 55 (CT55) of Homo sapiens (Human).